The sequence spans 140 residues: UPF0134 protein MPN_130 (140 aa).

This sequence belongs to the UPF0134 family.

The polypeptide is UPF0134 protein MPN_130 (Mycoplasma pneumoniae (strain ATCC 29342 / M129 / Subtype 1) (Mycoplasmoides pneumoniae)).